The following is a 578-amino-acid chain: Probable actinorhodin transporter (578 aa).

The segment at 1-33 (MSSVEADEPDRATAPPSALLPEDGPGPDGTAAG) is disordered. 12 helical membrane passes run 78–98 (VIQWITVGYTLAFAVLLVVGG), 109–129 (MFVVGAVGFTAASVLCSVAAG), 135–155 (AARFLQGGLGALMIPQGLGLI), 170–190 (AFGPAIGLGAVLGPIVAGFLV), 202–222 (VFLINLPIGVAVIVGAVLLLP), 232–252 (FDVVGMALVTSGLTLLIFPLV), 259–279 (WPAWAFVLMLAGAAVLVGFVA), 306–326 (GLAVALVFFTGVSGMSLLLAL), 341–361 (LTMTPWSVFLVVGAILTGAVL), 369–389 (ALHGGLVVLALGVLIMLLTIG), 444–464 (LGFTVGVAVLGTLFFGLLGSQ), and 546–566 (AMVRTLWVVIALLAVSFALAF).

It belongs to the major facilitator superfamily. EmrB family.

Its subcellular location is the cell membrane. Functionally, promotes the efflux of actinorhodin. The protein is Probable actinorhodin transporter (actII-2) of Streptomyces coelicolor (strain ATCC BAA-471 / A3(2) / M145).